An 888-amino-acid polypeptide reads, in one-letter code: Patched domain-containing protein 1 (888 aa).

A helical membrane pass occupies residues 20 to 40 (FIASHPVFFASAPVLISILLG). Asn77, Asn133, and Asn167 each carry an N-linked (GlcNAc...) asparagine glycan. An SSD domain is found at 268-427 (SERYLVTSLI…LSFYGSSLVF (160 aa)). 2 consecutive transmembrane segments (helical) span residues 273-293 (VTSL…QDCV) and 298-318 (WLGL…AGII). N-linked (GlcNAc...) asparagine glycosylation is found at Asn319 and Asn326. 4 consecutive transmembrane segments (helical) span residues 328–348 (TFLG…FEML), 373–393 (LSFS…ASPF), 407–427 (CIAI…SLVF), and 502–522 (PFVV…YLQV). Residues Asn568, Asn599, and Asn608 are each glycosylated (N-linked (GlcNAc...) asparagine). A run of 2 helical transmembrane segments spans residues 707-727 (ALFL…NVWI) and 738-758 (VIGF…LCLI). Asn762 carries N-linked (GlcNAc...) asparagine glycosylation. The helical transmembrane segment at 795 to 815 (GVAILQSYLCYIVGLIPLAAV) threads the bilayer. Asn818 is a glycosylation site (N-linked (GlcNAc...) asparagine). The helical transmembrane segment at 826-846 (CLFLIAFVTFFHCFAILPVIL) threads the bilayer.

It belongs to the patched family. As to expression, widely expressed, including in various regions of the brain with highest expression in the gray and white cerebellum, followed by the cerebellar vermis and the pituitary gland.

The protein localises to the cell membrane. It is found in the cell projection. Its subcellular location is the dendritic spine. Required for the development and function of the thalamic reticular nucleus (TRN), a part of the thalamus that is critical for thalamocortical transmission, generation of sleep rhythms, sensorimotor processing and attention. Can bind cholesterol in vitro. The protein is Patched domain-containing protein 1 of Homo sapiens (Human).